The chain runs to 363 residues: Peptide chain release factor 1 (363 aa).

N5-methylglutamine is present on Gln-237. A compositionally biased stretch (basic and acidic residues) spans 284–296 (EDEKRRSAEESTR). The tract at residues 284–305 (EDEKRRSAEESTRRSLVASGDR) is disordered.

Belongs to the prokaryotic/mitochondrial release factor family. In terms of processing, methylated by PrmC. Methylation increases the termination efficiency of RF1.

It is found in the cytoplasm. Peptide chain release factor 1 directs the termination of translation in response to the peptide chain termination codons UAG and UAA. The polypeptide is Peptide chain release factor 1 (Shewanella sp. (strain MR-4)).